A 637-amino-acid chain; its full sequence is Chaperone protein DnaK (637 aa).

Phosphothreonine; by autocatalysis is present on threonine 196. 2 disordered regions span residues 484–528 (KATG…EVDT) and 598–637 (TEAG…VDDK). Basic and acidic residues predominate over residues 501–528 (SETEIEKMKKDASSHADEDKKKKEEVDT). Residues 600 to 620 (AGAPGAAGAAGAAGQGQSASS) show a composition bias toward low complexity. Over residues 621–637 (GKDDEVKNADFEVVDDK) the composition is skewed to basic and acidic residues.

It belongs to the heat shock protein 70 family.

In terms of biological role, acts as a chaperone. The protein is Chaperone protein DnaK of Chloroherpeton thalassium (strain ATCC 35110 / GB-78).